The sequence spans 370 residues: Pantothenate kinase 3 (370 aa).

The active-site Proton acceptor is the E138. Acetyl-CoA-binding residues include S192, S195, and R207.

This sequence belongs to the type II pantothenate kinase family. Homodimer.

It localises to the cytoplasm. It carries out the reaction (R)-pantothenate + ATP = (R)-4'-phosphopantothenate + ADP + H(+). Its pathway is cofactor biosynthesis; coenzyme A biosynthesis; CoA from (R)-pantothenate: step 1/5. With respect to regulation, subject to allosteric regulation, exists in two distinct conformational states, a catalytically incompetent (or open) conformation stabilized by the binding of acetyl(acyl)-CoA, and a catalytically competent (or closed) conformation stabilized by ATP-binding. Inhibited by acetyl-CoA and its thioesters which act as allosteric inhibitors and compete with the ATP-binding site. In terms of biological role, catalyzes the phosphorylation of pantothenate to generate 4'-phosphopantothenate in the first and rate-determining step of coenzyme A (CoA) synthesis. The polypeptide is Pantothenate kinase 3 (PANK3) (Bos taurus (Bovine)).